The chain runs to 172 residues: S-ribosylhomocysteine lyase (172 aa).

The Fe cation site is built by histidine 54, histidine 58, and cysteine 128.

This sequence belongs to the LuxS family. As to quaternary structure, homodimer. Requires Fe cation as cofactor.

The catalysed reaction is S-(5-deoxy-D-ribos-5-yl)-L-homocysteine = (S)-4,5-dihydroxypentane-2,3-dione + L-homocysteine. Involved in the synthesis of autoinducer 2 (AI-2) which is secreted by bacteria and is used to communicate both the cell density and the metabolic potential of the environment. The regulation of gene expression in response to changes in cell density is called quorum sensing. Catalyzes the transformation of S-ribosylhomocysteine (RHC) to homocysteine (HC) and 4,5-dihydroxy-2,3-pentadione (DPD). This chain is S-ribosylhomocysteine lyase, found in Photobacterium profundum (strain SS9).